Reading from the N-terminus, the 109-residue chain is Large ribosomal subunit protein uL22 (109 aa).

This sequence belongs to the universal ribosomal protein uL22 family. As to quaternary structure, part of the 50S ribosomal subunit.

This protein binds specifically to 23S rRNA; its binding is stimulated by other ribosomal proteins, e.g. L4, L17, and L20. It is important during the early stages of 50S assembly. It makes multiple contacts with different domains of the 23S rRNA in the assembled 50S subunit and ribosome. Its function is as follows. The globular domain of the protein is located near the polypeptide exit tunnel on the outside of the subunit, while an extended beta-hairpin is found that lines the wall of the exit tunnel in the center of the 70S ribosome. This is Large ribosomal subunit protein uL22 from Ralstonia nicotianae (strain ATCC BAA-1114 / GMI1000) (Ralstonia solanacearum).